The sequence spans 373 residues: Alanine dehydrogenase (373 aa).

Positions 15 and 74 each coordinate substrate. The active-site Proton donor/acceptor is histidine 95. NAD(+) contacts are provided by residues serine 133, 177-178 (QA), aspartate 197, serine 219, 238-239 (VL), 266-269 (IAID), and 298-301 (VANM). Catalysis depends on aspartate 269, which acts as the Proton donor/acceptor.

It belongs to the AlaDH/PNT family. Homohexamer. Trimer of dimer.

It carries out the reaction L-alanine + NAD(+) + H2O = pyruvate + NH4(+) + NADH + H(+). It functions in the pathway amino-acid degradation; L-alanine degradation via dehydrogenase pathway; NH(3) and pyruvate from L-alanine: step 1/1. Functionally, catalyzes the reversible reductive amination of pyruvate to L-alanine. May play a role in cell wall synthesis as L-alanine is an important constituent of the peptidoglycan layer. The protein is Alanine dehydrogenase (ald) of Staphylococcus haemolyticus (strain JCSC1435).